Here is a 658-residue protein sequence, read N- to C-terminus: Putative arrestin-related trafficking adapter C2D10.04 (658 aa).

2 disordered regions span residues 21-107 and 638-658; these read LHHQ…LTWS and REEAPHRSLSRTVSRSFEIPR. Low complexity predominate over residues 39 to 81; sequence NRSSNSGLNRRNSVFGLPSSGLSSRLSKPSLSSINNSNNSSSN. The span at 96-107 shows a compositional bias: polar residues; that stretch reads RNMSNKPPLTWS. Residue serine 653 is modified to Phosphoserine.

It belongs to the ALY1 family.

Its subcellular location is the cytoplasm. Functionally, may regulate endocytosis in response to extracellular stimuli. This is Putative arrestin-related trafficking adapter C2D10.04 from Schizosaccharomyces pombe (strain 972 / ATCC 24843) (Fission yeast).